Reading from the N-terminus, the 540-residue chain is CTP synthase (540 aa).

An amidoligase domain region spans residues 1–267 (MTKYIFVTGG…DQKVCDFLHL (267 aa)). A CTP-binding site is contributed by serine 13. Residue serine 13 coordinates UTP. Residue 14–19 (SLGKGI) coordinates ATP. Residue tyrosine 54 participates in L-glutamine binding. Residue aspartate 71 coordinates ATP. Residues aspartate 71 and glutamate 141 each contribute to the Mg(2+) site. Residues 148–150 (DIE), 188–193 (KTKPTQ), and lysine 224 contribute to the CTP site. UTP contacts are provided by residues 188-193 (KTKPTQ) and lysine 224. A Glutamine amidotransferase type-1 domain is found at 294-537 (TITLVGKYVE…IGAASGLPAQ (244 aa)). Glycine 356 serves as a coordination point for L-glutamine. Cysteine 383 acts as the Nucleophile; for glutamine hydrolysis in catalysis. L-glutamine is bound by residues 384–387 (LGMQ), glutamate 407, and arginine 465. Catalysis depends on residues histidine 510 and glutamate 512.

It belongs to the CTP synthase family. In terms of assembly, homotetramer.

It carries out the reaction UTP + L-glutamine + ATP + H2O = CTP + L-glutamate + ADP + phosphate + 2 H(+). The enzyme catalyses L-glutamine + H2O = L-glutamate + NH4(+). The catalysed reaction is UTP + NH4(+) + ATP = CTP + ADP + phosphate + 2 H(+). It functions in the pathway pyrimidine metabolism; CTP biosynthesis via de novo pathway; CTP from UDP: step 2/2. With respect to regulation, allosterically activated by GTP, when glutamine is the substrate; GTP has no effect on the reaction when ammonia is the substrate. The allosteric effector GTP functions by stabilizing the protein conformation that binds the tetrahedral intermediate(s) formed during glutamine hydrolysis. Inhibited by the product CTP, via allosteric rather than competitive inhibition. Catalyzes the ATP-dependent amination of UTP to CTP with either L-glutamine or ammonia as the source of nitrogen. Regulates intracellular CTP levels through interactions with the four ribonucleotide triphosphates. The sequence is that of CTP synthase from Lactobacillus johnsonii (strain CNCM I-12250 / La1 / NCC 533).